The primary structure comprises 293 residues: Formamidopyrimidine-DNA glycosylase (293 aa).

Pro2 acts as the Schiff-base intermediate with DNA in catalysis. Glu3 (proton donor) is an active-site residue. The active-site Proton donor; for beta-elimination activity is the Lys58. His104, Arg123, and Lys166 together coordinate DNA. Residues Ala257 to Lys293 form an FPG-type zinc finger. Arg283 serves as the catalytic Proton donor; for delta-elimination activity.

Belongs to the FPG family. In terms of assembly, monomer. Zn(2+) serves as cofactor.

The enzyme catalyses Hydrolysis of DNA containing ring-opened 7-methylguanine residues, releasing 2,6-diamino-4-hydroxy-5-(N-methyl)formamidopyrimidine.. The catalysed reaction is 2'-deoxyribonucleotide-(2'-deoxyribose 5'-phosphate)-2'-deoxyribonucleotide-DNA = a 3'-end 2'-deoxyribonucleotide-(2,3-dehydro-2,3-deoxyribose 5'-phosphate)-DNA + a 5'-end 5'-phospho-2'-deoxyribonucleoside-DNA + H(+). In terms of biological role, involved in base excision repair of DNA damaged by oxidation or by mutagenic agents. Acts as a DNA glycosylase that recognizes and removes damaged bases. Has a preference for oxidized purines, such as 7,8-dihydro-8-oxoguanine (8-oxoG). Has AP (apurinic/apyrimidinic) lyase activity and introduces nicks in the DNA strand. Cleaves the DNA backbone by beta-delta elimination to generate a single-strand break at the site of the removed base with both 3'- and 5'-phosphates. This chain is Formamidopyrimidine-DNA glycosylase, found in Rhodopseudomonas palustris (strain BisB5).